Reading from the N-terminus, the 136-residue chain is Large ribosomal subunit protein uL16 (136 aa).

The protein belongs to the universal ribosomal protein uL16 family. Part of the 50S ribosomal subunit.

Functionally, binds 23S rRNA and is also seen to make contacts with the A and possibly P site tRNAs. This Mesomycoplasma hyopneumoniae (strain 232) (Mycoplasma hyopneumoniae) protein is Large ribosomal subunit protein uL16.